The chain runs to 190 residues: Crossover junction endodeoxyribonuclease RuvC (190 aa).

Catalysis depends on residues Asp8, Glu67, and Asp139. Residues Asp8, Glu67, and Asp139 each contribute to the Mg(2+) site.

It belongs to the RuvC family. Homodimer which binds Holliday junction (HJ) DNA. The HJ becomes 2-fold symmetrical on binding to RuvC with unstacked arms; it has a different conformation from HJ DNA in complex with RuvA. In the full resolvosome a probable DNA-RuvA(4)-RuvB(12)-RuvC(2) complex forms which resolves the HJ. It depends on Mg(2+) as a cofactor.

Its subcellular location is the cytoplasm. The enzyme catalyses Endonucleolytic cleavage at a junction such as a reciprocal single-stranded crossover between two homologous DNA duplexes (Holliday junction).. Functionally, the RuvA-RuvB-RuvC complex processes Holliday junction (HJ) DNA during genetic recombination and DNA repair. Endonuclease that resolves HJ intermediates. Cleaves cruciform DNA by making single-stranded nicks across the HJ at symmetrical positions within the homologous arms, yielding a 5'-phosphate and a 3'-hydroxyl group; requires a central core of homology in the junction. The consensus cleavage sequence is 5'-(A/T)TT(C/G)-3'. Cleavage occurs on the 3'-side of the TT dinucleotide at the point of strand exchange. HJ branch migration catalyzed by RuvA-RuvB allows RuvC to scan DNA until it finds its consensus sequence, where it cleaves and resolves the cruciform DNA. The chain is Crossover junction endodeoxyribonuclease RuvC from Haemophilus influenzae (strain PittEE).